We begin with the raw amino-acid sequence, 98 residues long: Sec-independent protein translocase protein TatA (98 aa).

Residues 1 to 21 (MGAMSPWHWAIVALVVVILFG) traverse the membrane as a helical segment. The disordered stretch occupies residues 43–98 (VKEMQNDNSTPAPTAQSAPPPQSAPAELPVADTTTAPVTPPAPVQPQSQHTEPKSA). Low complexity predominate over residues 66 to 79 (APAELPVADTTTAP).

Belongs to the TatA/E family. As to quaternary structure, the Tat system comprises two distinct complexes: a TatABC complex, containing multiple copies of TatA, TatB and TatC subunits, and a separate TatA complex, containing only TatA subunits. Substrates initially bind to the TatABC complex, which probably triggers association of the separate TatA complex to form the active translocon.

Its subcellular location is the cell membrane. Part of the twin-arginine translocation (Tat) system that transports large folded proteins containing a characteristic twin-arginine motif in their signal peptide across membranes. TatA could form the protein-conducting channel of the Tat system. This is Sec-independent protein translocase protein TatA from Rhodococcus erythropolis (Arthrobacter picolinophilus).